The chain runs to 399 residues: Probable 2,3-bisphosphoglycerate-independent phosphoglycerate mutase (399 aa).

This sequence belongs to the BPG-independent phosphoglycerate mutase family. A-PGAM subfamily.

The catalysed reaction is (2R)-2-phosphoglycerate = (2R)-3-phosphoglycerate. It participates in carbohydrate degradation; glycolysis; pyruvate from D-glyceraldehyde 3-phosphate: step 3/5. Functionally, catalyzes the interconversion of 2-phosphoglycerate and 3-phosphoglycerate. In Geobacter sulfurreducens (strain ATCC 51573 / DSM 12127 / PCA), this protein is Probable 2,3-bisphosphoglycerate-independent phosphoglycerate mutase.